We begin with the raw amino-acid sequence, 436 residues long: Trigger factor (436 aa).

The 86-residue stretch at 163-248 folds into the PPIase FKBP-type domain; it reads GDRVTIDFEG…VKKIEAAHLP (86 aa).

This sequence belongs to the FKBP-type PPIase family. Tig subfamily.

The protein resides in the cytoplasm. It carries out the reaction [protein]-peptidylproline (omega=180) = [protein]-peptidylproline (omega=0). Its function is as follows. Involved in protein export. Acts as a chaperone by maintaining the newly synthesized protein in an open conformation. Functions as a peptidyl-prolyl cis-trans isomerase. The chain is Trigger factor from Polaromonas naphthalenivorans (strain CJ2).